A 432-amino-acid chain; its full sequence is D-amino acid dehydrogenase (432 aa).

3–17 provides a ligand contact to FAD; that stretch reads VVILGSGVVGVASAW.

This sequence belongs to the DadA oxidoreductase family. The cofactor is FAD.

It carries out the reaction a D-alpha-amino acid + A + H2O = a 2-oxocarboxylate + AH2 + NH4(+). Its pathway is amino-acid degradation; D-alanine degradation; NH(3) and pyruvate from D-alanine: step 1/1. Its function is as follows. Oxidative deamination of D-amino acids. This chain is D-amino acid dehydrogenase, found in Escherichia coli O127:H6 (strain E2348/69 / EPEC).